We begin with the raw amino-acid sequence, 402 residues long: MNLKPRNNSWKQNLYIVWFGCFLTGAGFSLIMPFLPLYVEELGIKDHESLNLWTGVAFSITFLFSAIAAPFWGKLSDRKGRKLMLLRSALGMAIVMVLIGFAQNIWQLLILRALLGVLGGFVPNANALIATQVPVKKSGWALGTLSTGAVSGALIGPLIGGILADLYGLRPVFFITAAVLFICFIVTLFFVSENFTPVSKKDALSTQQVFSSLKNKRLVICLFFTTMIIQVATGSVTPILTLYIRDLAGSISNLAFISGVIASVPGIAALISAPRFGKLGDRIGPDKVLIFTLGLSIFMLIPMALVSNYWELGALRFLLGAVNAAMLPAVQTLILYNITPAIAGRIFSYNQALRDVGNVTGPLMGAFVAANYGFRAVFYFTAAVVFFNLIYSWISFRTPQRK.

The next 11 membrane-spanning stretches (helical) occupy residues 14 to 34 (LYIV…IMPF), 52 to 72 (LWTG…APFW), 90 to 110 (LGMA…QLLI), 113 to 133 (ALLG…ATQV), 149 to 169 (AVSG…LYGL), 171 to 191 (PVFF…LFFV), 219 to 239 (VICL…VTPI), 254 to 274 (LAFI…ISAP), 288 to 308 (VLIF…LVSN), 318 to 338 (LLGA…LYNI), and 376 to 396 (AVFY…WISF).

Belongs to the major facilitator superfamily. DHA1 family. MdtG (TC 2.A.1.2.20) subfamily.

It is found in the cell inner membrane. This is Multidrug resistance protein MdtG from Proteus mirabilis (strain HI4320).